We begin with the raw amino-acid sequence, 828 residues long: Glycerol-3-phosphate acyltransferase (828 aa).

An HXXXXD motif motif is present at residues 309-314 (CHRSHI).

It belongs to the GPAT/DAPAT family.

Its subcellular location is the cell inner membrane. The enzyme catalyses sn-glycerol 3-phosphate + an acyl-CoA = a 1-acyl-sn-glycero-3-phosphate + CoA. It functions in the pathway phospholipid metabolism; CDP-diacylglycerol biosynthesis; CDP-diacylglycerol from sn-glycerol 3-phosphate: step 1/3. This chain is Glycerol-3-phosphate acyltransferase, found in Pseudomonas putida (strain W619).